The following is a 487-amino-acid chain: GTPase Der (487 aa).

2 consecutive EngA-type G domains span residues 3-167 and 203-378; these read FTLA…EGFA and LQIA…DIWN. GTP is bound by residues 9 to 16, 56 to 60, 119 to 122, 209 to 216, 256 to 260, and 321 to 324; these read GRPNVGKS, DTAGL, NKAE, GRPNAGKS, DTAGM, and NKWD. The 85-residue stretch at 379–463 folds into the KH-like domain; it reads RRITTARLNT…PIRLTMRGQG (85 aa). Positions 451 to 487 are disordered; the sequence is PGTPIRLTMRGQGDKNPFKERKFRTPSRLRKHLGKKD. Positions 471 to 487 are enriched in basic residues; it reads RKFRTPSRLRKHLGKKD.

The protein belongs to the TRAFAC class TrmE-Era-EngA-EngB-Septin-like GTPase superfamily. EngA (Der) GTPase family. Associates with the 50S ribosomal subunit.

In terms of biological role, GTPase that plays an essential role in the late steps of ribosome biogenesis. In Cereibacter sphaeroides (strain ATCC 17029 / ATH 2.4.9) (Rhodobacter sphaeroides), this protein is GTPase Der.